Consider the following 105-residue polypeptide: Small ribosomal subunit protein bS18 (105 aa).

The tract at residues 1-34 (MMINKEQDLNQLETNQEQSVEQNQTDEKRKPKPN) is disordered. Positions 9–23 (LNQLETNQEQSVEQN) are enriched in polar residues.

This sequence belongs to the bacterial ribosomal protein bS18 family. As to quaternary structure, part of the 30S ribosomal subunit. Forms a tight heterodimer with protein bS6.

In terms of biological role, binds as a heterodimer with protein bS6 to the central domain of the 16S rRNA, where it helps stabilize the platform of the 30S subunit. This chain is Small ribosomal subunit protein bS18, found in Mycoplasma genitalium (strain ATCC 33530 / DSM 19775 / NCTC 10195 / G37) (Mycoplasmoides genitalium).